Here is a 109-residue protein sequence, read N- to C-terminus: UPF0060 membrane protein YfjF (109 aa).

The next 4 helical transmembrane spans lie at 6–26 (ILLFLAAGLAEIGGGYLVWLW), 32–52 (PAGYGIAGALILIVYGILPTF), 61–81 (VYAAYGGVFIVLAVLWGWLVD), and 87–107 (LYDWIGAFICLIGVCVILFAP).

The protein belongs to the UPF0060 family.

The protein resides in the cell membrane. The sequence is that of UPF0060 membrane protein YfjF (yfjF) from Bacillus subtilis (strain 168).